We begin with the raw amino-acid sequence, 573 residues long: Ribosomal RNA-processing protein 9 (573 aa).

The segment at 1–63 (MSDVTQQKKR…FEGENPADKR (63 aa)) is disordered. Residue S2 is modified to N-acetylserine. A compositionally biased stretch (acidic residues) spans 25 to 58 (DEEITDPSSNEDEQLEVSDEEDALESEEEFEGEN). Residues 32-106 (SSNEDEQLEV…KERTIDEYNN (75 aa)) are a coiled coil. S50 is subject to Phosphoserine. 6 WD repeats span residues 234–273 (GHYD…PVKV), 278–317 (DRRG…QLEI), 320–359 (GHHD…RLTF), 397–435 (FCEG…PIFT), 471–509 (QPFW…RSFE), and 516–562 (GAKG…ARNG).

The protein belongs to the WD repeat RRP9 family. As to quaternary structure, interacts with UTP25. Component of the ribosomal small subunit (SSU) processome composed of at least 40 protein subunits and snoRNA U3.

The protein resides in the nucleus. Its subcellular location is the nucleolus. Functionally, involved in nucleolar processing of pre-18S ribosomal RNA. Required for efficient pre-rRNA cleavage at sites A0, A1 and A2, and biosynthesis of 18S rRNA. This Saccharomyces cerevisiae (strain ATCC 204508 / S288c) (Baker's yeast) protein is Ribosomal RNA-processing protein 9 (RRP9).